The chain runs to 102 residues: Nuclear protein 2 (102 aa).

2 disordered regions span residues 1–26 and 46–102; these read MDPPTRPSVSGPRTRARPPPPEALPT and PASG…TRLA. Basic residues predominate over residues 85–102; it reads QRKRRQRQLQPRPRTRLA.

This sequence belongs to the NUPR family.

Its subcellular location is the nucleus. In terms of biological role, acts as a transcriptional repressor by inhibiting gene expression at the NUPR1 promoter in a p53/TP53-dependent manner in cancer cells. Involved in the G1 cell cycle arrest, and in a decrease in cell viability and cell proliferation of pancreatic cancer cells. Plays a role as a negative regulator of the protumoral factor NUPR1. This chain is Nuclear protein 2, found in Mus musculus (Mouse).